A 422-amino-acid polypeptide reads, in one-letter code: Histidine--tRNA ligase (422 aa).

This sequence belongs to the class-II aminoacyl-tRNA synthetase family. As to quaternary structure, homodimer.

The protein resides in the cytoplasm. The enzyme catalyses tRNA(His) + L-histidine + ATP = L-histidyl-tRNA(His) + AMP + diphosphate + H(+). The chain is Histidine--tRNA ligase from Aliivibrio fischeri (strain ATCC 700601 / ES114) (Vibrio fischeri).